Here is a 211-residue protein sequence, read N- to C-terminus: Thymidylate kinase (211 aa).

Gly11–Thr18 contributes to the ATP binding site.

It belongs to the thymidylate kinase family.

The catalysed reaction is dTMP + ATP = dTDP + ADP. Phosphorylation of dTMP to form dTDP in both de novo and salvage pathways of dTTP synthesis. In Streptococcus pyogenes serotype M3 (strain ATCC BAA-595 / MGAS315), this protein is Thymidylate kinase.